The following is a 328-amino-acid chain: Malate dehydrogenase (328 aa).

12 to 18 (GAAGQIG) is a binding site for NAD(+). Residues arginine 93 and arginine 99 each coordinate substrate. Residues asparagine 106, glutamine 113, and 130-132 (TGN) each bind NAD(+). Substrate is bound by residues asparagine 132 and arginine 163. Histidine 188 functions as the Proton acceptor in the catalytic mechanism.

The protein belongs to the LDH/MDH superfamily. MDH type 2 family.

The catalysed reaction is (S)-malate + NAD(+) = oxaloacetate + NADH + H(+). In terms of biological role, catalyzes the reversible oxidation of malate to oxaloacetate. The polypeptide is Malate dehydrogenase (Kocuria rhizophila (strain ATCC 9341 / DSM 348 / NBRC 103217 / DC2201)).